A 283-amino-acid polypeptide reads, in one-letter code: Phosphatidylserine decarboxylase proenzyme (283 aa).

Catalysis depends on charge relay system; for autoendoproteolytic cleavage activity residues Asp96, His152, and Ser250. The active-site Schiff-base intermediate with substrate; via pyruvic acid; for decarboxylase activity is Ser250. Ser250 bears the Pyruvic acid (Ser); by autocatalysis mark.

This sequence belongs to the phosphatidylserine decarboxylase family. PSD-B subfamily. Prokaryotic type I sub-subfamily. Heterodimer of a large membrane-associated beta subunit and a small pyruvoyl-containing alpha subunit. It depends on pyruvate as a cofactor. Post-translationally, is synthesized initially as an inactive proenzyme. Formation of the active enzyme involves a self-maturation process in which the active site pyruvoyl group is generated from an internal serine residue via an autocatalytic post-translational modification. Two non-identical subunits are generated from the proenzyme in this reaction, and the pyruvate is formed at the N-terminus of the alpha chain, which is derived from the carboxyl end of the proenzyme. The autoendoproteolytic cleavage occurs by a canonical serine protease mechanism, in which the side chain hydroxyl group of the serine supplies its oxygen atom to form the C-terminus of the beta chain, while the remainder of the serine residue undergoes an oxidative deamination to produce ammonia and the pyruvoyl prosthetic group on the alpha chain. During this reaction, the Ser that is part of the protease active site of the proenzyme becomes the pyruvoyl prosthetic group, which constitutes an essential element of the active site of the mature decarboxylase.

It is found in the cell membrane. It catalyses the reaction a 1,2-diacyl-sn-glycero-3-phospho-L-serine + H(+) = a 1,2-diacyl-sn-glycero-3-phosphoethanolamine + CO2. Its pathway is phospholipid metabolism; phosphatidylethanolamine biosynthesis; phosphatidylethanolamine from CDP-diacylglycerol: step 2/2. In terms of biological role, catalyzes the formation of phosphatidylethanolamine (PtdEtn) from phosphatidylserine (PtdSer). This Acinetobacter baumannii (strain ATCC 17978 / DSM 105126 / CIP 53.77 / LMG 1025 / NCDC KC755 / 5377) protein is Phosphatidylserine decarboxylase proenzyme.